Consider the following 634-residue polypeptide: MTVASHKETLGFQTEVKQLLNLMIHALYSNKEIFLRELISNGADAADKLRFEALTDDALYEDDSALHIRLSYDKDKRTLTIADNGIGMGRQEVVENIGTIAKSGTRAFLESLSGDQAKDARLIGQFGVGFYSAFIVADKVVLETRRAGFGPEHGVRWESGGAGDYTIETIEKATRGTVVTLHLREGEDEFLDGWRLRHIVTRYSDHIDLPIEIKREIGDEEKSEENGEEWEQINKATALWTLPKNDIKEEEYQAFYKHVAHDFEDPLAWTHNRVEGKLEYTSLLFIPPRAPFDLWERDRTQGIKLYVQRVFIMDDTEQLMPRYLRFVRGVVDSNDLPLNISREILQNNRVIDSIRAGSVKKILGLLEDMAKHEAKKYQSFWKEFGQVMKEGVGEDSGNREQIARLLRFASTHHDTAEQTVSLADYLSRMKEGQDKIYYITADSFPAAKSSPHLEVFRKKGIEVLLLSDRVDEWLVASLPEFEGKSLQSVTKGELDLGHLEDEQEKQQQKEVEEDFQNLVERVKNNLGDKVKEVRVTHRLTDSPVCLVVEQHDMSGYLERLLKEAGQQAPHIQPILELNPAHPIIARLKGEESEENFGDWAHLLFEQALLAEGGRLEEPALFVKRLNSLLLAMAD.

Positions 1-342 are a; substrate-binding; it reads MTVASHKETL…SNDLPLNISR (342 aa). The segment at 343 to 559 is b; that stretch reads EILQNNRVID…QHDMSGYLER (217 aa). Positions 560–634 are c; that stretch reads LLKEAGQQAP…LNSLLLAMAD (75 aa).

It belongs to the heat shock protein 90 family. Homodimer.

It is found in the cytoplasm. Its function is as follows. Molecular chaperone. Has ATPase activity. This chain is Chaperone protein HtpG, found in Nitrosococcus oceani (strain ATCC 19707 / BCRC 17464 / JCM 30415 / NCIMB 11848 / C-107).